The sequence spans 173 residues: Ribulose bisphosphate carboxylase small subunit, chloroplastic 5 (173 aa).

The transit peptide at 1–49 directs the protein to the chloroplast; the sequence is MASIPATVATVAQANMVAPFTGLKSNAAFPVTKKVNDFSTLPSNGGRVQ.

The protein belongs to the RuBisCO small chain family. In terms of assembly, heterohexadecamer of 8 large and 8 small subunits.

Its subcellular location is the plastid. The protein localises to the chloroplast. RuBisCO catalyzes two reactions: the carboxylation of D-ribulose 1,5-bisphosphate, the primary event in carbon dioxide fixation, as well as the oxidative fragmentation of the pentose substrate. Both reactions occur simultaneously and in competition at the same active site. Although the small subunit is not catalytic it is essential for maximal activity. The polypeptide is Ribulose bisphosphate carboxylase small subunit, chloroplastic 5 (Flaveria pringlei).